We begin with the raw amino-acid sequence, 198 residues long: MYFGKTRQSDQSGRVPPNQNVTTSFPVLHTGDVPYYEDMTKWNLQVYGLVDHPMLLSFEDVKAFPRYESKNDIHCVTGWSRLDNVWQGVRACDIAEKAGVKEEAGYVILHAEEGWTTNLPLDDFLAETSLLAYAHNGEPLTPEHGFPLRGVFPHLYFWKSAKWLRGIQFTKENHPGFWERNGYHMRGDPWQNQRFTWD.

Positions 1-23 (MYFGKTRQSDQSGRVPPNQNVTT) are disordered. A compositionally biased stretch (polar residues) spans 9 to 23 (SDQSGRVPPNQNVTT). Positions 75, 144, and 149 each coordinate Mo-molybdopterin.

Mo-molybdopterin is required as a cofactor.

This is an uncharacterized protein from Bacillus subtilis (strain 168).